We begin with the raw amino-acid sequence, 133 residues long: Large-conductance mechanosensitive channel (133 aa).

Transmembrane regions (helical) follow at residues 10–30 and 76–96; these read FAMR…GAFG and GAFI…FLMI.

It belongs to the MscL family. In terms of assembly, homopentamer.

The protein resides in the cell inner membrane. Functionally, channel that opens in response to stretch forces in the membrane lipid bilayer. May participate in the regulation of osmotic pressure changes within the cell. The polypeptide is Large-conductance mechanosensitive channel (Pasteurella multocida (strain Pm70)).